The primary structure comprises 750 residues: Phosphate transporter PHO1 homolog 7 (750 aa).

The region spanning 1–298 is the SPX domain; sequence MKFGKDFVRQ…SRSAAKPYME (298 aa). Residues 1–350 lie on the Cytoplasmic side of the membrane; sequence MKFGKDFVRQ…KVKKEKHRIT (350 aa). The chain crosses the membrane as a helical span at residues 351–371; that stretch reads FSTGFFVGCTVSLVVALVMFI. Topologically, residues 372 to 391 are extracellular; it reads HARNIMGAVGHKVYMETMFP. The helical transmembrane segment at 392 to 412 threads the bilayer; that stretch reads LYSLFAFVVLHMIMYASNIYF. The Cytoplasmic portion of the chain corresponds to 413 to 435; it reads WKRYRVNYPFIFGFKEGTELGYR. A helical transmembrane segment spans residues 436-456; the sequence is HVLLLSFGLGTLALCAVLINL. The Extracellular segment spans residues 457–472; it reads DMEMDPNTNDYKTMTE. Residues 473 to 493 traverse the membrane as a helical segment; the sequence is LLPMFILALVVAILFCPFNIF. Residues 494 to 622 are Cytoplasmic-facing; sequence YRSSRVFFLM…YSFNRGNIWK (129 aa). Residues 557–750 enclose the EXS domain; the sequence is RSSDVYSTFY…NYNEEEDRDS (194 aa). The helical transmembrane segment at 623 to 643 threads the bilayer; the sequence is ISAWVFSALATFYGTYWDIVF. Topologically, residues 644 to 666 are extracellular; the sequence is DWGLLHRPSKHLLREKLLVPHKA. The helical transmembrane segment at 667–687 threads the bilayer; sequence VYYVAIVLNIVLRMAWLQTVL. Topologically, residues 688 to 750 are cytoplasmic; it reads DFNLSFLHRE…NYNEEEDRDS (63 aa).

It belongs to the SYG1 (TC 2.A.94) family. Expressed in root tips, vascular cylinders of roots and filaments, leaf hydathodes, stem, receptacle and stigma apex.

It localises to the cell membrane. May transport inorganic phosphate (Pi). The protein is Phosphate transporter PHO1 homolog 7 (PHO1-H7) of Arabidopsis thaliana (Mouse-ear cress).